A 66-amino-acid polypeptide reads, in one-letter code: MKQGIHPAYKKVIVRCACGNEFESGSVKDELRVEICSECHPFFTGKQKFVSAAGRVDKFNKKYGLK.

4 residues coordinate Zn(2+): cysteine 16, cysteine 18, cysteine 36, and cysteine 39.

This sequence belongs to the bacterial ribosomal protein bL31 family. Type A subfamily. Part of the 50S ribosomal subunit. Zn(2+) is required as a cofactor.

Binds the 23S rRNA. The polypeptide is Large ribosomal subunit protein bL31 (Geobacillus thermodenitrificans (strain NG80-2)).